The following is a 365-amino-acid chain: tRNA/tmRNA (uracil-C(5))-methyltransferase (365 aa).

Gln189, Tyr217, Asn222, Glu238, and Asp298 together coordinate S-adenosyl-L-methionine. The active-site Nucleophile is the Cys323. Residue Glu357 is the Proton acceptor of the active site.

This sequence belongs to the class I-like SAM-binding methyltransferase superfamily. RNA M5U methyltransferase family. TrmA subfamily.

The catalysed reaction is uridine(54) in tRNA + S-adenosyl-L-methionine = 5-methyluridine(54) in tRNA + S-adenosyl-L-homocysteine + H(+). The enzyme catalyses uridine(341) in tmRNA + S-adenosyl-L-methionine = 5-methyluridine(341) in tmRNA + S-adenosyl-L-homocysteine + H(+). Functionally, dual-specificity methyltransferase that catalyzes the formation of 5-methyluridine at position 54 (m5U54) in all tRNAs, and that of position 341 (m5U341) in tmRNA (transfer-mRNA). The polypeptide is tRNA/tmRNA (uracil-C(5))-methyltransferase (Shewanella sediminis (strain HAW-EB3)).